We begin with the raw amino-acid sequence, 444 residues long: N-succinylarginine dihydrolase (444 aa).

Substrate contacts are provided by residues 19 to 28 (AGLSFGNVAS), asparagine 110, and 137 to 138 (HR). The active site involves glutamate 174. Arginine 214 serves as a coordination point for substrate. Histidine 250 is an active-site residue. 2 residues coordinate substrate: aspartate 252 and asparagine 362. Catalysis depends on cysteine 368, which acts as the Nucleophile.

This sequence belongs to the succinylarginine dihydrolase family. Homodimer.

It carries out the reaction N(2)-succinyl-L-arginine + 2 H2O + 2 H(+) = N(2)-succinyl-L-ornithine + 2 NH4(+) + CO2. It participates in amino-acid degradation; L-arginine degradation via AST pathway; L-glutamate and succinate from L-arginine: step 2/5. Functionally, catalyzes the hydrolysis of N(2)-succinylarginine into N(2)-succinylornithine, ammonia and CO(2). This Shewanella denitrificans (strain OS217 / ATCC BAA-1090 / DSM 15013) protein is N-succinylarginine dihydrolase.